Reading from the N-terminus, the 349-residue chain is Phosphoribosylformylglycinamidine cyclo-ligase (349 aa).

This sequence belongs to the AIR synthase family.

It localises to the cytoplasm. It catalyses the reaction 2-formamido-N(1)-(5-O-phospho-beta-D-ribosyl)acetamidine + ATP = 5-amino-1-(5-phospho-beta-D-ribosyl)imidazole + ADP + phosphate + H(+). Its pathway is purine metabolism; IMP biosynthesis via de novo pathway; 5-amino-1-(5-phospho-D-ribosyl)imidazole from N(2)-formyl-N(1)-(5-phospho-D-ribosyl)glycinamide: step 2/2. This Lawsonia intracellularis (strain PHE/MN1-00) protein is Phosphoribosylformylglycinamidine cyclo-ligase.